The chain runs to 1040 residues: MQVLPPSSTGGPSRLFIMRPVATTLLMVAILLAGIIGYRALPVSALPEVDYPTIQVVTLYPGASPDVMTSAVTAPLERQFGQMSGLKQMSSQSSGGASVITLQFQLTLPLDVAEQEVQAAINAATNLLPSDLPNPPVYSKVNPADPPIMTLAVTSTAMPMTQVEDMVETRVAQKISQISGVGLVTLSGGQRPAVRVKLNAQAIAALGLTSETVRTAITGANVNSAKGSLDGPSRAVTLSANDQMQSAEEYRQLIIAYQNGAPIRLGDVATVEQGAENSWLGAWANKEQAIVMNVQRQPGANIISTADSIRQMLPQLTESLPKSVKVTVLSDRTTNIRASVDDTQFELMMAIALVVMIIYLFLRNIPATIIPGVAVPLSLIGTFAVMVFLDFSINNLTLMALTIATGFVVDDAIVVIENISRYIEKGEKPLAAALKGAGEIGFTIISLTFSLIAVLIPLLFMGDIVGRLFREFAITLAVAILISAVVSLTLTPMMCARMLSQESLRKQNRFSRASEKMFDRIIAAYGRGLAKVLNHPWLTLSVALSTLLLSVLLWVFIPKGFFPVQDNGIIQGTLQAPQSSSFTNMAQRQRQVADVILQDPAVQSLTSFVGVDGTNPSLNSARLQINLKPLDERDDRVQKVIARLQTAVDKVPGVDLFLQPTQDLTIDTQVSRTQYQFTLQATSLDALSTWVPQLMEKLQQLPQLSDVSSDWQDQGLVAYVNVDRDSASRLGISMADVDNALYNAFGQRLISTIYTQANQYRVVLEHNTEITPGLAALDTIRLTSSDGGVVPLSSIAKVEQRFAPLSINHLDQFPVTTISFNVPDNYSLGDAVQEIMDTEKTLNLPVDITTQFQGSTLAFQSALGSTVWLIVAAVVAMYIVLGILYESFIHPITILSTLPTAGVGALLALMIAGSELDVIAIIGIILLIGIVKKNAIMMIDFALAAEREQGMSPRDAIYQACLLRFRPILMTTLAALLGALPLMLSTGVGAELRRPLGIGMVGGLIVSQVLTLFTTPVIYLLFDRLALWTKSRFARHEEEA.

12 helical membrane-spanning segments follow: residues 16–36 (FIMRPVATTLLMVAILLAGII), 347–367 (LMMAIALVVMIIYLFLRNIPA), 369–389 (IIPGVAVPLSLIGTFAVMVFL), 396–416 (LTLMALTIATGFVVDDAIVVI), 440–460 (IGFTIISLTFSLIAVLIPLLF), 472–492 (FAITLAVAILISAVVSLTLTP), 537–557 (WLTLSVALSTLLLSVLLWVFI), 863–883 (LGSTVWLIVAAVVAMYIVLGI), 888–908 (FIHPITILSTLPTAGVGALLA), 911–931 (IAGSELDVIAIIGIILLIGIV), 968–988 (ILMTTLAALLGALPLMLSTGV), and 998–1018 (IGMVGGLIVSQVLTLFTTPVI).

The protein belongs to the resistance-nodulation-cell division (RND) (TC 2.A.6) family. MdtB subfamily. Part of a tripartite efflux system composed of MdtA, MdtB and MdtC. MdtB forms a heteromultimer with MdtC.

It localises to the cell inner membrane. This Shigella sonnei (strain Ss046) protein is Multidrug resistance protein MdtB.